Here is a 301-residue protein sequence, read N- to C-terminus: Glutathione transport system permease protein GsiD (301 aa).

Helical transmembrane passes span 37-57, 103-123, 141-161, 162-182, 220-240, and 264-284; these read VAVAAGLFVLLLIAIAFWAQY, LAAGIFSVLVGMMIGTTLGLL, VLFAFPGILLAIAVVAIMGSG, MANVVVAVAIFSIPAFARLVR, IVVFFSMRIGMSIITAASLSF, and VIAPHVAIFPSLAIFLTVLAF. Residues 99-288 enclose the ABC transmembrane type-1 domain; it reads TRISLAAGIF…LTVLAFNLLG (190 aa).

Belongs to the binding-protein-dependent transport system permease family. As to quaternary structure, the complex is composed of two ATP-binding proteins (GsiA), two transmembrane proteins (GsiC and GsiD) and a solute-binding protein (GsiB).

Its subcellular location is the cell inner membrane. Its function is as follows. Part of the ABC transporter complex GsiABCD involved in glutathione import. Probably responsible for the translocation of the substrate across the membrane. In Pectobacterium atrosepticum (strain SCRI 1043 / ATCC BAA-672) (Erwinia carotovora subsp. atroseptica), this protein is Glutathione transport system permease protein GsiD.